The sequence spans 1006 residues: Probable sulfite reductase [NADPH] flavoprotein component (1006 aa).

One can recognise an FAD-binding FR-type domain in the interval 622–852 (EKVFTVHVRA…AVKTSVMKLP (231 aa)). FAD-binding positions include 658–669 (YDIGEALGVYGV) and 788–798 (IKRREYSISSS).

The cofactor is FAD. FMN serves as cofactor.

It catalyses the reaction hydrogen sulfide + 3 NADP(+) + 3 H2O = sulfite + 3 NADPH + 4 H(+). The protein operates within sulfur metabolism; hydrogen sulfide biosynthesis; hydrogen sulfide from sulfite (NADPH route): step 1/1. Its function is as follows. This enzyme catalyzes the 6-electron reduction of sulfite to sulfide. This is one of several activities required for the biosynthesis of L-cysteine from sulfate. The polypeptide is Probable sulfite reductase [NADPH] flavoprotein component (Schizosaccharomyces pombe (strain 972 / ATCC 24843) (Fission yeast)).